We begin with the raw amino-acid sequence, 699 residues long: Zinc finger protein 782 (699 aa).

A KRAB domain is found at 8-79 (VSFQDVTVEF…EKEKGFLSRN (72 aa)). The tract at residues 75–95 (FLSRNSPEDSQPDEISEKSPE) is disordered. The segment at 279–307 (CFCRITHKTLTGGKSFSQKSHIREHHRVH) adopts a C2H2-type 1; degenerate zinc-finger fold. The C2H2-type 2; degenerate zinc finger occupies 316-332 (GKSFNRNSTLPVHQRTH). A C2H2-type 3; degenerate zinc finger spans residues 337 to 360 (YSDYHPCTETFSYQSTFSVHQKVH). The C2H2-type 4; degenerate zinc-finger motif lies at 366-388 (YEYNECGKSCSMNSHLIWPQKSH). 11 consecutive C2H2-type zinc fingers follow at residues 394 to 416 (YECP…QRTH), 422 to 444 (YKCD…QRTH), 450 to 472 (FECH…QRTH), 478 to 500 (FECN…RRTH), 506 to 528 (YKCD…HRTH), 534 to 556 (YKCN…HRIH), 562 to 584 (YKCN…HRTH), 590 to 612 (YQCE…QRTH), 618 to 640 (YECN…QRTH), 646 to 668 (YNCN…QRTH), and 674 to 696 (YKCD…QKAH).

It belongs to the krueppel C2H2-type zinc-finger protein family.

It localises to the nucleus. Its function is as follows. May be involved in transcriptional regulation. The chain is Zinc finger protein 782 (ZNF782) from Homo sapiens (Human).